We begin with the raw amino-acid sequence, 98 residues long: Pancreatic polypeptide prohormone (98 aa).

The N-terminal stretch at 1–29 is a signal peptide; it reads MAVAYYCLSLFLLSTWVALLLQPLQGAWG. Tyrosine 65 is modified (tyrosine amide).

The protein belongs to the NPY family. In terms of processing, no icosapeptide-like peptide is cleaved from the C-terminal.

The protein localises to the secreted. Its function is as follows. Hormone secreted by pancreatic cells that acts as a regulator of pancreatic and gastrointestinal functions probably by signaling through the G protein-coupled receptor NPY4R2. The polypeptide is Pancreatic polypeptide prohormone (Ppy) (Rattus norvegicus (Rat)).